The chain runs to 296 residues: Phosphatidylglycerol--prolipoprotein diacylglyceryl transferase (296 aa).

3 helical membrane passes run 17–37 (LAVR…IVVG), 59–79 (MMFY…VLFY), and 97–117 (GGMS…LFAW). Arg-142 is an a 1,2-diacyl-sn-glycero-3-phospho-(1'-sn-glycerol) binding site. A run of 2 helical transmembrane segments spans residues 230–250 (MGAI…TVEF) and 265–285 (LSMG…MMIW).

Belongs to the Lgt family.

The protein localises to the cell inner membrane. The enzyme catalyses L-cysteinyl-[prolipoprotein] + a 1,2-diacyl-sn-glycero-3-phospho-(1'-sn-glycerol) = an S-1,2-diacyl-sn-glyceryl-L-cysteinyl-[prolipoprotein] + sn-glycerol 1-phosphate + H(+). It functions in the pathway protein modification; lipoprotein biosynthesis (diacylglyceryl transfer). Its function is as follows. Catalyzes the transfer of the diacylglyceryl group from phosphatidylglycerol to the sulfhydryl group of the N-terminal cysteine of a prolipoprotein, the first step in the formation of mature lipoproteins. This is Phosphatidylglycerol--prolipoprotein diacylglyceryl transferase from Burkholderia thailandensis (strain ATCC 700388 / DSM 13276 / CCUG 48851 / CIP 106301 / E264).